A 179-amino-acid chain; its full sequence is uncharacterized protein (179 aa).

The Rhodanese domain occupies 21–109 (QQDAVILVDV…WKQAGLPTVK (89 aa)). The next 2 membrane-spanning stretches (helical) occupy residues 115-135 (ISIM…GVLL) and 138-158 (FVAP…LFAG).

The protein localises to the cell membrane. This is an uncharacterized protein from Synechocystis sp. (strain ATCC 27184 / PCC 6803 / Kazusa).